The chain runs to 350 residues: D-alanine--D-alanine ligase (350 aa).

One can recognise an ATP-grasp domain in the interval 135 to 335; it reads KLYAKNLGVK…LAQSLPKTPK (201 aa). An ATP-binding site is contributed by 164 to 219; it reads KPSFNFPFIVKPNNAGSSLGVSVVKEEKELAYALDGAFEYSKEVLIEPFIQRVKEY. Mg(2+) is bound by residues aspartate 291, glutamate 303, and asparagine 305.

Belongs to the D-alanine--D-alanine ligase family. Requires Mg(2+) as cofactor. Mn(2+) serves as cofactor.

The protein localises to the cytoplasm. It carries out the reaction 2 D-alanine + ATP = D-alanyl-D-alanine + ADP + phosphate + H(+). The protein operates within cell wall biogenesis; peptidoglycan biosynthesis. Functionally, cell wall formation. In Helicobacter acinonychis (strain Sheeba), this protein is D-alanine--D-alanine ligase.